A 126-amino-acid chain; its full sequence is Fluoride-specific ion channel FluC (126 aa).

The next 4 membrane-spanning stretches (helical) occupy residues 5 to 25 (VLAVSVGAVIGANLRWGLGLW), 35 to 55 (WGTLVANLSGGWLIGVLMAFF), 68 to 88 (FAVTGLCGALTTFSTFSLEMF), and 99 to 119 (ALVGILAHVVGSILMTALGFL). 2 residues coordinate Na(+): G75 and T78.

The protein belongs to the fluoride channel Fluc/FEX (TC 1.A.43) family.

The protein resides in the cell inner membrane. The catalysed reaction is fluoride(in) = fluoride(out). Its activity is regulated as follows. Na(+) is not transported, but it plays an essential structural role and its presence is essential for fluoride channel function. In terms of biological role, fluoride-specific ion channel. Important for reducing fluoride concentration in the cell, thus reducing its toxicity. In Marinobacter nauticus (strain ATCC 700491 / DSM 11845 / VT8) (Marinobacter aquaeolei), this protein is Fluoride-specific ion channel FluC.